A 158-amino-acid chain; its full sequence is Nucleoside diphosphate kinase (158 aa).

ATP is bound by residues lysine 16, phenylalanine 64, arginine 92, threonine 98, arginine 109, and asparagine 119. Histidine 122 serves as the catalytic Pros-phosphohistidine intermediate.

The protein belongs to the NDK family. Requires Mg(2+) as cofactor.

The protein localises to the cytoplasm. The enzyme catalyses a 2'-deoxyribonucleoside 5'-diphosphate + ATP = a 2'-deoxyribonucleoside 5'-triphosphate + ADP. The catalysed reaction is a ribonucleoside 5'-diphosphate + ATP = a ribonucleoside 5'-triphosphate + ADP. Major role in the synthesis of nucleoside triphosphates other than ATP. The ATP gamma phosphate is transferred to the NDP beta phosphate via a ping-pong mechanism, using a phosphorylated active-site intermediate. This is Nucleoside diphosphate kinase from Haloquadratum walsbyi (strain DSM 16790 / HBSQ001).